The primary structure comprises 336 residues: tRNA N6-adenosine threonylcarbamoyltransferase (336 aa).

The Fe cation site is built by His114 and His118. Residues 136 to 140 (LVSGG), Asp169, Gly182, Asp186, and Asn275 each bind substrate. Asp301 contributes to the Fe cation binding site.

The protein belongs to the KAE1 / TsaD family. Fe(2+) serves as cofactor.

It localises to the cytoplasm. The enzyme catalyses L-threonylcarbamoyladenylate + adenosine(37) in tRNA = N(6)-L-threonylcarbamoyladenosine(37) in tRNA + AMP + H(+). Functionally, required for the formation of a threonylcarbamoyl group on adenosine at position 37 (t(6)A37) in tRNAs that read codons beginning with adenine. Is involved in the transfer of the threonylcarbamoyl moiety of threonylcarbamoyl-AMP (TC-AMP) to the N6 group of A37, together with TsaE and TsaB. TsaD likely plays a direct catalytic role in this reaction. The chain is tRNA N6-adenosine threonylcarbamoyltransferase from Streptococcus pneumoniae (strain P1031).